The sequence spans 62 residues: Photosystem II reaction center protein Z (62 aa).

2 helical membrane passes run 8-28 and 41-61; these read AVFA…VVFA and FSGT…NSLI.

This sequence belongs to the PsbZ family. PSII is composed of 1 copy each of membrane proteins PsbA, PsbB, PsbC, PsbD, PsbE, PsbF, PsbH, PsbI, PsbJ, PsbK, PsbL, PsbM, PsbT, PsbY, PsbZ, Psb30/Ycf12, at least 3 peripheral proteins of the oxygen-evolving complex and a large number of cofactors. It forms dimeric complexes.

The protein localises to the plastid. The protein resides in the chloroplast thylakoid membrane. Its function is as follows. May control the interaction of photosystem II (PSII) cores with the light-harvesting antenna, regulates electron flow through the 2 photosystem reaction centers. PSII is a light-driven water plastoquinone oxidoreductase, using light energy to abstract electrons from H(2)O, generating a proton gradient subsequently used for ATP formation. This chain is Photosystem II reaction center protein Z, found in Cucumis sativus (Cucumber).